The following is a 396-amino-acid chain: S-adenosylmethionine synthase (396 aa).

An ATP-binding site is contributed by H15. Residue D17 coordinates Mg(2+). E43 provides a ligand contact to K(+). L-methionine is bound by residues E56 and Q99. Positions 99 to 109 (QSGDIAQGVDT) are flexible loop. Residues 173-175 (DGK), 241-242 (RF), D250, 256-257 (RK), A273, and K277 each bind ATP. D250 provides a ligand contact to L-methionine. K281 is a binding site for L-methionine.

It belongs to the AdoMet synthase family. Homotetramer; dimer of dimers. Requires Mg(2+) as cofactor. K(+) is required as a cofactor.

The protein resides in the cytoplasm. The catalysed reaction is L-methionine + ATP + H2O = S-adenosyl-L-methionine + phosphate + diphosphate. It participates in amino-acid biosynthesis; S-adenosyl-L-methionine biosynthesis; S-adenosyl-L-methionine from L-methionine: step 1/1. In terms of biological role, catalyzes the formation of S-adenosylmethionine (AdoMet) from methionine and ATP. The overall synthetic reaction is composed of two sequential steps, AdoMet formation and the subsequent tripolyphosphate hydrolysis which occurs prior to release of AdoMet from the enzyme. This is S-adenosylmethionine synthase from Nocardioides sp. (strain ATCC BAA-499 / JS614).